We begin with the raw amino-acid sequence, 198 residues long: Transcriptional regulator GfcR (198 aa).

This sequence belongs to the purine/pyrimidine phosphoribosyltransferase family. GfcR subfamily.

The protein is Transcriptional regulator GfcR of Thermoplasma acidophilum (strain ATCC 25905 / DSM 1728 / JCM 9062 / NBRC 15155 / AMRC-C165).